A 244-amino-acid polypeptide reads, in one-letter code: Salivary antigen-5 (244 aa).

The N-terminal stretch at 1 to 23 is a signal peptide; sequence MAKAHSSLVFCLLALALVRFAQA. Residues 46–202 enclose the SCP domain; that stretch reads LDFHNKFREL…WYTGYLVCNY (157 aa). 2 N-linked (GlcNAc...) asparagine glycosylation sites follow: asparagine 106 and asparagine 172.

Belongs to the CRISP family. Venom allergen 5-like subfamily. In terms of tissue distribution, salivary gland (at protein level).

The protein localises to the secreted. In terms of biological role, inhibits host platelet aggregation induced by low doses of collagen. In Triatoma infestans (Assassin bug), this protein is Salivary antigen-5.